Consider the following 398-residue polypeptide: MESLNNRLDWLQEQLLTLYEKDSKDIEDQIMQWNLLRQEQVLFHYARKKGIMRLGLQVVPSLAASQDKAKTAIEMTLYLSGLRDSQYGSEQWSLQDTSREIFLAPPDHTFKKGGQTIEVIYDEDPNNSTRHTVWRHIYYQNGDNRWRKAASDVDVHGVFYLEYDGVKNYYVDFQEEANRYSKTGRYTVQYEGKRFTNVMSPVNSSPLRTSGSPTDTNPATQGQSTQTARKAETKGSRHHPKSPAVRKRRPYGRRRSRSPRDTTLRRGEGESARASAGSGERVAFISPGDVGTSTRSPPKGGQSRLRRLIQEARDPPIICLKGGPNQLKCLRYRIKASNSSDFESISTTWHWVHNKCTDRVGHARMLVRFISTEQRDRFLDKVVVPKSVSVILGAFDGS.

The transactivation domain stretch occupies residues 1 to 205 (MESLNNRLDW…TNVMSPVNSS (205 aa)). A compositionally biased stretch (polar residues) spans 197 to 228 (NVMSPVNSSPLRTSGSPTDTNPATQGQSTQTA). The tract at residues 197-304 (NVMSPVNSSP…RSPPKGGQSR (108 aa)) is disordered. Residues 236–257 (SRHHPKSPAVRKRRPYGRRRSR) show a composition bias toward basic residues. A compositionally biased stretch (basic and acidic residues) spans 258 to 271 (SPRDTTLRRGEGES). The DNA-binding domain stretch occupies residues 314–398 (DPPIICLKGG…SVILGAFDGS (85 aa)). A Glycyl lysine isopeptide (Lys-Gly) (interchain with G-Cter in SUMO) cross-link involves residue Lys-321.

This sequence belongs to the papillomaviridae E2 protein family. In terms of assembly, binds DNA as homodimer. Interacts with protein E1; this interaction greatly increases E1 DNA-binding activity. Interacts with protein L1; this interaction enhances E2-dependent replication and transcription activation. Interacts with protein L2; this interaction inhibits E2 transcriptional activity but not DNA replication function E2. Interacts with protein E7; this interaction inhibits E7 oncogenic activity. Interacts with host TAF1; this interaction modulates E2-dependent transcriptional regulation. Interacts with host BRD4; this interaction mediates E2 transcriptional activation function. Additionally, the interaction with host BRD4 on mitotic chromosomes mediates tethering of the viral genome. Interacts with host TOPBP1; this interaction is required for optimal viral DNA replication. In terms of processing, phosphorylated. Post-translationally, sumoylation plays a regulatory role in E2 transcriptional activity.

The protein localises to the host nucleus. In terms of biological role, plays a role in the initiation of viral DNA replication. A dimer of E2 interacts with a dimer of E1 in order to improve specificity of E1 DNA binding activity. Once the complex recognizes and binds DNA at specific sites, the E2 dimer is removed from DNA. E2 also regulates viral transcription through binding to the E2RE response element (5'-ACCNNNNNNGGT-3') present in multiple copies in the regulatory regions of the viral genome. Activates or represses transcription depending on E2RE's position with regards to proximal promoter elements including the TATA-box. Repression occurs by sterically hindering the assembly of the transcription initiation complex. In Human papillomavirus type 63, this protein is Regulatory protein E2.